The sequence spans 160 residues: Putative pre-16S rRNA nuclease (160 aa).

It belongs to the YqgF nuclease family.

The protein resides in the cytoplasm. Functionally, could be a nuclease involved in processing of the 5'-end of pre-16S rRNA. The sequence is that of Putative pre-16S rRNA nuclease from Cereibacter sphaeroides (strain KD131 / KCTC 12085) (Rhodobacter sphaeroides).